The primary structure comprises 592 residues: Syntaxin-binding protein 3 (592 aa).

The segment at 1–255 (MAPPVAERGL…STVLHELTFQ (255 aa)) is mediates interaction with DOC2B.

This sequence belongs to the STXBP/unc-18/SEC1 family. As to quaternary structure, interacts with DOC2B; the interaction is direct, occurs at the cell membrane, excludes interaction with STX4 and regulates glucose-stimulated insulin secretion. Interacts with STX4. In terms of processing, phosphorylated by PKC in platelets in response to thrombin stimulation; phosphorylation inhibits binding to STX4. Megakaryocytes and platelets.

Its subcellular location is the cytoplasm. The protein localises to the cytosol. It is found in the cell membrane. Functionally, together with STX4 and VAMP2, may play a role in insulin-dependent movement of GLUT4 and in docking/fusion of intracellular GLUT4-containing vesicles with the cell surface in adipocytes. This Homo sapiens (Human) protein is Syntaxin-binding protein 3 (STXBP3).